Consider the following 915-residue polypeptide: DNA repair-scaffolding protein (915 aa).

Residues 1–15 are compositionally biased toward basic residues; sequence MPRGSRARGSKRKRS. Disordered regions lie at residues 1–30 and 56–114; these read MPRG…RPLQ and FQNT…EDKT. Positions 56–65 are enriched in polar residues; sequence FQNTSGNPSL. Residues 67–85 are compositionally biased toward basic and acidic residues; sequence AEEKTITEKHLELCPRPKQ. A compositionally biased stretch (polar residues) spans 86 to 107; it reads ETTTSKSTSGLTDITWSSSGSD. The necessary for interaction with RAD51 stretch occupies residues 151 to 450; the sequence is EISDCASCAS…GTAWTHGHKE (300 aa).

Found in a complex, at least composed of BLM, RAD51 and SPIDR; the complex formation is mediated by SPIDR. Interacts (via C-terminal region) with BLM; the interaction is direct. Interacts with RAD51; the interaction is direct. Interacts (via the C-terminal region) with FIGNL1 (via N-terminal one-half region); the interaction is direct.

The protein resides in the nucleus. Functionally, plays a role in DNA double-strand break (DBS) repair via homologous recombination (HR). Serves as a scaffolding protein that helps to promote the recruitment of DNA-processing enzymes like the helicase BLM and recombinase RAD51 to site of DNA damage, and hence contributes to maintain genomic integrity. The sequence is that of DNA repair-scaffolding protein (SPIDR) from Homo sapiens (Human).